A 171-amino-acid polypeptide reads, in one-letter code: Putative MucR family transcriptional regulatory protein y4pD (171 aa).

Belongs to the ros/MucR family.

This Sinorhizobium fredii (strain NBRC 101917 / NGR234) protein is Putative MucR family transcriptional regulatory protein y4pD.